A 291-amino-acid chain; its full sequence is UDP-N-acetylenolpyruvoylglucosamine reductase (291 aa).

The FAD-binding PCMH-type domain occupies arginine 22–aspartate 187. Residue arginine 166 is part of the active site. Cysteine 214 (proton donor) is an active-site residue. The active site involves glutamate 283.

It belongs to the MurB family. The cofactor is FAD.

It is found in the cytoplasm. It catalyses the reaction UDP-N-acetyl-alpha-D-muramate + NADP(+) = UDP-N-acetyl-3-O-(1-carboxyvinyl)-alpha-D-glucosamine + NADPH + H(+). It participates in cell wall biogenesis; peptidoglycan biosynthesis. Functionally, cell wall formation. This is UDP-N-acetylenolpyruvoylglucosamine reductase from Chlamydia trachomatis serovar A (strain ATCC VR-571B / DSM 19440 / HAR-13).